A 388-amino-acid polypeptide reads, in one-letter code: N-acetylneuraminate epimerase (388 aa).

The first 26 residues, 1 to 26 (MFSLIGAKRQAIGIAALAWSTGAVMA), serve as a signal peptide directing secretion. Kelch repeat units follow at residues 48 to 92 (MAYV…AAAG), 94 to 147 (KIFA…VGLA), 149 to 186 (GRIA…KLVD), 187 to 232 (SYMG…ATMG), 236 to 285 (FLLV…VAGA), 307 to 356 (ANAA…DAPG), and 358 to 387 (LLVV…LSVE).

It belongs to the NanM family. As to quaternary structure, homodimer.

Its subcellular location is the periplasm. It carries out the reaction N-acetyl-alpha-neuraminate = N-acetyl-beta-neuraminate. Converts alpha-N-acetylneuranimic acid (Neu5Ac) to the beta-anomer, accelerating the equilibrium between the alpha- and beta-anomers. Probably facilitates sialidase-negative bacteria to compete successfully for limited amounts of extracellular Neu5Ac, which is likely taken up in the beta-anomer. In addition, the rapid removal of sialic acid from solution might be advantageous to the bacterium to damp down host responses. The protein is N-acetylneuraminate epimerase of Brucella suis (strain ATCC 23445 / NCTC 10510).